A 352-amino-acid polypeptide reads, in one-letter code: Sphingosine 1-phosphate receptor 2 (352 aa).

Residues 1 to 34 (MGGLYSEYLNPEKVLEHYNYTKETLDMQETTSRK) are Extracellular-facing. N19 is a glycosylation site (N-linked (GlcNAc...) asparagine). The chain crosses the membrane as a helical span at residues 35-59 (VASAFIIILCCAIVVENLLVLIAVA). Residues 60 to 66 (RNSKFHS) lie on the Cytoplasmic side of the membrane. A helical membrane pass occupies residues 67–95 (AMYLFLGNLAASDLLAGVAFVANTLLSGH). The Extracellular portion of the chain corresponds to 96 to 109 (VTLSLTPVQWFARE). Residues 110 to 128 (GSAFITLSASVFSLLAIAI) form a helical membrane-spanning segment. The Cytoplasmic segment spans residues 129–147 (ERQVALAKVKLYGSDKSCR). A helical transmembrane segment spans residues 148–173 (MLMLIGASWLISLILGGLPILGWNCL). Over 174–189 (NQLEACSTVLPLYAKH) the chain is Extracellular. The helical transmembrane segment at 190 to 210 (YVLCVVTIFSVILLAIVALYV) threads the bilayer. Residues 211–233 (RIYFVVRSSHADVAGPQTLALLK) lie on the Cytoplasmic side of the membrane. The helical transmembrane segment at 234-255 (TVTIVLGVFIICWLPAFSILLL) threads the bilayer. Topologically, residues 256 to 271 (DSTCPVRACPVLYKAH) are extracellular. Residues 272–292 (YFFAFATLNSLLNPVIYTWRS) traverse the membrane as a helical segment. Residues 293–352 (RDLRREVLRPLQCWRRGKGVTGRRGGNPGHRLLPLRSSSSLERGMHMPTSPTFLEGNTVV) lie on the Cytoplasmic side of the membrane. The S-palmitoyl cysteine moiety is linked to residue C305. The tract at residues 333-352 (LERGMHMPTSPTFLEGNTVV) is disordered.

It belongs to the G-protein coupled receptor 1 family. Most abundant in heart and lung; low, but clearly observed in kidney, liver and thymus; much lower but detectable in brain, testis, stomach and intestine. Not significantly detected in any of the sections of embryonic day (E) 14-18, except in embryonic brain.

It localises to the cell membrane. In terms of biological role, receptor for the lysosphingolipid sphingosine 1-phosphate (S1P). S1P is a bioactive lysophospholipid that elicits diverse physiological effects on most types of cells and tissues. Receptor for the chemokine-like protein FAM19A5. Mediates the inhibitory effect of FAM19A5 on vascular smooth muscle cell proliferation and migration. In lymphoid follicles, couples the binding of S1P to the activation of GNA13 and downstream inhibition of AKT activation leading to suppression of germinal center (GC) B cell growth and migration outside the GC niche. This is Sphingosine 1-phosphate receptor 2 (S1pr2) from Mus musculus (Mouse).